Here is a 678-residue protein sequence, read N- to C-terminus: NADPH--cytochrome P450 reductase (678 aa).

G2 is modified (N-acetylglycine). Residues 2-22 are Lumenal-facing; it reads GDSHEDTSATVPEAVAEEVSL. Residues 23–43 traverse the membrane as a helical segment; it reads FSTTDIVLFSLIVGVLTYWFI. Over 44 to 678 the chain is Cytoplasmic; it reads FKKKKEEIPE…KGRYSLDVWS (635 aa). The region spanning 80-224 is the Flavodoxin-like domain; it reads IIVFYGSQTG…DFITWREQFW (145 aa). FMN is bound by residues 86-91, 138-141, 173-182, and D208; these read SQTGTA, ATYG, and LGNKTYEHFN. The FAD-binding FR-type domain maps to 279–521; it reads KNPFLAAVTT…FVRKSQFRLP (243 aa). R298 is an NADP(+) binding site. FAD is bound by residues R424, 454 to 457, 472 to 474, Y478, and 488 to 491; these read RYYS, CAV, and GVAT. Residues T535, 596-597, 602-606, and D639 contribute to the NADP(+) site; these read SR and KVYVQ. W677 is a binding site for FAD.

The protein belongs to the NADPH--cytochrome P450 reductase family. This sequence in the N-terminal section; belongs to the flavodoxin family. In the C-terminal section; belongs to the flavoprotein pyridine nucleotide cytochrome reductase family. FAD is required as a cofactor. Requires FMN as cofactor.

The protein localises to the endoplasmic reticulum membrane. It carries out the reaction 2 oxidized [cytochrome P450] + NADPH = 2 reduced [cytochrome P450] + NADP(+) + H(+). This enzyme is required for electron transfer from NADP to cytochrome P450 in microsomes. It can also provide electron transfer to heme oxygenase and cytochrome B5. The sequence is that of NADPH--cytochrome P450 reductase from Mus musculus (Mouse).